We begin with the raw amino-acid sequence, 127 residues long: Large ribosomal subunit protein bL20 (127 aa).

This sequence belongs to the bacterial ribosomal protein bL20 family.

Its function is as follows. Binds directly to 23S ribosomal RNA and is necessary for the in vitro assembly process of the 50S ribosomal subunit. It is not involved in the protein synthesizing functions of that subunit. The sequence is that of Large ribosomal subunit protein bL20 from Opitutus terrae (strain DSM 11246 / JCM 15787 / PB90-1).